A 246-amino-acid chain; its full sequence is Transcriptional regulatory protein LytR (246 aa).

In terms of domain architecture, Response regulatory spans 2-116 (KALIIDDEPL…RIEQAVNKVR (115 aa)). A 4-aspartylphosphate modification is found at Asp-53. Residues 141–245 (LPVEIDDKIH…MKDFKASIGL (105 aa)) form the HTH LytTR-type domain.

As to quaternary structure, homodimer; when phosphorylated. In terms of processing, phosphorylated and dephosphorylated by LytS.

The protein resides in the cytoplasm. Functionally, member of the two-component regulatory system LytR/LytS that regulates genes involved in autolysis, programmed cell death, biofilm formation and cell wall metabolism. Also participates in sensing and responding to host defense cationic antimicrobial peptides (HDPs). Upon phosphorylation by LytS, functions as a transcription regulator by direct binding to promoter regions of target genes including lrgA and lrgB, to positively regulate their expression. This Staphylococcus aureus (strain bovine RF122 / ET3-1) protein is Transcriptional regulatory protein LytR (lytR).